Here is a 152-residue protein sequence, read N- to C-terminus: Large-conductance mechanosensitive channel (152 aa).

A run of 2 helical transmembrane segments spans residues 14-34 (VIDL…VTSL) and 81-101 (GLFL…FIVI).

The protein belongs to the MscL family. In terms of assembly, homopentamer.

It is found in the cell membrane. In terms of biological role, channel that opens in response to stretch forces in the membrane lipid bilayer. May participate in the regulation of osmotic pressure changes within the cell. The sequence is that of Large-conductance mechanosensitive channel from Clostridium perfringens (strain ATCC 13124 / DSM 756 / JCM 1290 / NCIMB 6125 / NCTC 8237 / Type A).